The following is a 470-amino-acid chain: UDP-glycosyltransferase 75C1 (470 aa).

H16 (proton acceptor) is an active-site residue. An anthocyanidin is bound at residue H16. UDP-alpha-D-glucose-binding residues include Q347, H362, W365, N366, S367, E370, D386, and Q387.

This sequence belongs to the UDP-glycosyltransferase family. In terms of tissue distribution, expressed in flowers and fruits, especially in pulp, and, at lower levels, in seeds.

Its subcellular location is the cytoplasm. The protein resides in the nucleus. The enzyme catalyses 2-cis-(+)-abscisate + UDP-alpha-D-glucose = beta-D-glucopyranosyl cis-(+)-abscisate + UDP. It catalyses the reaction (indol-3-yl)acetate + UDP-alpha-D-glucose = 1-O-(indol-3-ylacetyl)-beta-D-glucose + UDP. Its function is as follows. Glucosyltransferase acting on both abscisic acid (ABA) and auxin (IAA). Required for ABA-mediated fruit ripening, seed germination, and negative responses to drought. This is UDP-glycosyltransferase 75C1 from Solanum lycopersicum (Tomato).